A 217-amino-acid chain; its full sequence is Yop proteins translocation protein R (217 aa).

The next 4 helical transmembrane spans lie at 11-31 (IIVL…TSFV), 53-73 (MAMY…VGFA), 157-177 (IGFL…NILL), and 181-201 (MMMV…FVLL).

This sequence belongs to the FliP/MopC/SpaP family.

The protein localises to the cell membrane. Its function is as follows. Component of the yop secretion machinery. May have a role in the negative pathway regulation of yop expression controlled by calcium. This Yersinia pestis protein is Yop proteins translocation protein R (yscR).